Reading from the N-terminus, the 341-residue chain is Phosphoribosylformylglycinamidine cyclo-ligase (341 aa).

The protein belongs to the AIR synthase family.

It is found in the cytoplasm. The catalysed reaction is 2-formamido-N(1)-(5-O-phospho-beta-D-ribosyl)acetamidine + ATP = 5-amino-1-(5-phospho-beta-D-ribosyl)imidazole + ADP + phosphate + H(+). It participates in purine metabolism; IMP biosynthesis via de novo pathway; 5-amino-1-(5-phospho-D-ribosyl)imidazole from N(2)-formyl-N(1)-(5-phospho-D-ribosyl)glycinamide: step 2/2. The polypeptide is Phosphoribosylformylglycinamidine cyclo-ligase (Xanthomonas campestris pv. campestris (strain B100)).